The primary structure comprises 486 residues: MTHYIQGQWHTGNGHDVTSINPANGETIWCGKTATAEQVNTAVEAARAAQFDWFMLGFDARLAIVEAYRSQLEANKAELAETIAQETGKPQWETATEVGAMIGKIALSAAAYHKRTGTEANDTPAGRAVIRHKPHGVVAVFGPYNFPGHLPNGHIVPALLAGNTVIFKPSELTPKVAELMVKLWDKAGLPAGVINLVQGEVDTGKALASHPQIDGLFFTGSSRTGHLLHQQYAGHPGKILALEMGGNNPLIIKGVQDIKAAVHDILQSAYISSGQRCTCARRLYVEQGEQGDALIALLVDAVKQIKVGPWNAQPQPFMGSMISETAAKGMVAAQANLLDLGGKVLVELTHLQAGTGLVSPGLIDVTAIDVLPDEEYFGPLLQLVRYGDFDQAIKLANQTRYGLSAGLLADSREDYDYFLARIRAGIVNWNKQITGASGAAPFGGVGASGNHRASAFYAADYCAYPVASVEADAVSLPATLSPGLSL.

Position 220 to 225 (220 to 225 (GSSRTG)) interacts with NAD(+). Residues E243 and C277 contribute to the active site.

This sequence belongs to the aldehyde dehydrogenase family. AstD subfamily.

It carries out the reaction N-succinyl-L-glutamate 5-semialdehyde + NAD(+) + H2O = N-succinyl-L-glutamate + NADH + 2 H(+). Its pathway is amino-acid degradation; L-arginine degradation via AST pathway; L-glutamate and succinate from L-arginine: step 4/5. Functionally, catalyzes the NAD-dependent reduction of succinylglutamate semialdehyde into succinylglutamate. In Shewanella putrefaciens (strain CN-32 / ATCC BAA-453), this protein is N-succinylglutamate 5-semialdehyde dehydrogenase.